We begin with the raw amino-acid sequence, 241 residues long: MTNVEVAATVAPNQLLDTLTLDNIKEYSNDIDIIELRIDQWEDRHLELLKSNLEQLQELNINANVLVTYRTISQGGKGEMTHEAYMTLLKEIIKNHHCQMIDIEWDSDFDVFAHRDLINLAHRYNKQVVISYHNFQETPDIDILKFTYYKMNQLNPDYVKIAVMPQDKEDVATLLEAVATSADTLDAKVIGISMSKVGLVSRTAQGVFGGTVSYGCLGEPQAPGQIHVKTLKQQLLFYSNH.

Residues Glu-35–Arg-37 and Arg-70 each bind 3-dehydroquinate. His-133 serves as the catalytic Proton donor/acceptor. Lys-160 functions as the Schiff-base intermediate with substrate in the catalytic mechanism. Residues Arg-202 and Gln-225 each coordinate 3-dehydroquinate.

Belongs to the type-I 3-dehydroquinase family. As to quaternary structure, homodimer.

The enzyme catalyses 3-dehydroquinate = 3-dehydroshikimate + H2O. It participates in metabolic intermediate biosynthesis; chorismate biosynthesis; chorismate from D-erythrose 4-phosphate and phosphoenolpyruvate: step 3/7. Functionally, involved in the third step of the chorismate pathway, which leads to the biosynthesis of aromatic amino acids. Catalyzes the cis-dehydration of 3-dehydroquinate (DHQ) and introduces the first double bond of the aromatic ring to yield 3-dehydroshikimate. This Staphylococcus haemolyticus (strain JCSC1435) protein is 3-dehydroquinate dehydratase.